We begin with the raw amino-acid sequence, 213 residues long: Ras-related protein Rab-2 (213 aa).

Residues Thr15, Gly16, Gly18, Lys19, Ser20, Cys21, Gln32, Pro33, His35, Thr38, Gly64, Asn119, Asp122, and Ala150 each contribute to the GTP site. Ser20 provides a ligand contact to Mg(2+). Residue Thr38 coordinates Mg(2+). A disordered region spans residues 190–213 (QHSPTNPSLPGAGGAAGAANSGCC). 2 S-geranylgeranyl cysteine lipidation sites follow: Cys212 and Cys213.

This sequence belongs to the small GTPase superfamily. Rab family. Interacts (GTP-bound form) with Vps16A and Vps39; the interaction with Vps39 is probably direct.

The protein localises to the vesicle. Its subcellular location is the cytoplasmic vesicle. It localises to the cell projection. It is found in the axon. The protein resides in the presynapse. The protein localises to the presynaptic active zone. Its subcellular location is the golgi apparatus. It localises to the trans-Golgi network. It is found in the perikaryon. The protein resides in the autophagosome membrane. The protein localises to the autolysosome membrane. It carries out the reaction GTP + H2O = GDP + phosphate + H(+). In terms of biological role, may be involved in bidirectional endoplasmic reticulum (ER) to Golgi trafficking. Together with Rab7 involved in promoting fusion of autophagosomes and endosomes with lysosomes, probably through recruitment of the HOPS tethering complex. Involved in biosynthetic transport to lysosomes. In larval motor neurons, mediates the biogenesis of presynaptic cargo vesicles and their long-range axonal trafficking to synaptic termini. Not involved in axonal trafficking of mitochondria. During vesicle biogenesis, active zone proteins (including brp/Bruchpilot) and synaptic vesicle proteins (including VGlut) are sorted from the trans-Golgi in a Rab2-dependent manner via, at least, two independent routes. Acts upstream of Arl8 during presynaptic precursor vesicle biogenesis. Associated with lysosomal marker positive presynaptic cargo vesicles during anterograde and retrograde axonal trafficking, probably while in its GTP-bound active state. Involved in the delivery of presynaptic cargos, but not presynapse assembly or active zone function at synaptic termini. Required for autophagocytosis-dependent remodeling of myofibrils and transverse-tubules (T-tubules) during metamorphosis. In Drosophila melanogaster (Fruit fly), this protein is Ras-related protein Rab-2.